The following is a 247-amino-acid chain: DNA polymerase sliding clamp (247 aa).

This sequence belongs to the PCNA family. As to quaternary structure, homotrimer. The subunits circularize to form a toroid; DNA passes through its center. Replication factor C (RFC) is required to load the toroid on the DNA.

Sliding clamp subunit that acts as a moving platform for DNA processing. Responsible for tethering the catalytic subunit of DNA polymerase and other proteins to DNA during high-speed replication. This is DNA polymerase sliding clamp from Natronomonas pharaonis (strain ATCC 35678 / DSM 2160 / CIP 103997 / JCM 8858 / NBRC 14720 / NCIMB 2260 / Gabara) (Halobacterium pharaonis).